The chain runs to 257 residues: Neurotrophin-3 (257 aa).

The N-terminal stretch at 1–18 (MSILFYMIFLAYLRGIQG) is a signal peptide. The propeptide occupies 19 to 138 (NSMDQRRLPE…VANRTARRKR (120 aa)). The tract at residues 61–81 (STLPKAEAPREPERGEPAKSE) is disordered. Residues 67-79 (EAPREPERGEPAK) show a composition bias toward basic and acidic residues. Residue Asn131 is glycosylated (N-linked (GlcNAc...) asparagine). Cystine bridges form between Cys152–Cys217, Cys195–Cys246, and Cys205–Cys248.

It belongs to the NGF-beta family.

The protein localises to the secreted. Functionally, seems to promote the survival of visceral and proprioceptive sensory neurons. The chain is Neurotrophin-3 (NTF3) from Sus scrofa (Pig).